A 335-amino-acid polypeptide reads, in one-letter code: DNA-directed RNA polymerase RPB7 homolog (335 aa).

This sequence belongs to the Asfivirus DNA-directed RNA polymerase RPB7 homolog family. Part of the viral DNA-directed RNA polymerase that consists of 8 polII-like subunits (RPB1, RPB2, RPB3, RPB5, RPB6, RPB7, RPB9, RPB10), a capping enzyme and a termination factor.

The protein localises to the host cytoplasm. The protein resides in the virion. In terms of biological role, component of the DNA-directed RNA polymerase (RNAP) that catalyzes the transcription in the cytoplasm of viral DNA into RNA using the four ribonucleoside triphosphates as substrates. This is DNA-directed RNA polymerase RPB7 homolog from African swine fever virus (isolate Pig/Kenya/KEN-50/1950) (ASFV).